The following is a 200-amino-acid chain: GMP synthase [glutamine-hydrolyzing] subunit A (200 aa).

The Glutamine amidotransferase type-1 domain occupies 3 to 193 (KIYVVDNGGQ…IGICASYREI (191 aa)). Cysteine 80 serves as the catalytic Nucleophile. Residues histidine 167 and glutamate 169 contribute to the active site.

As to quaternary structure, heterodimer composed of a glutamine amidotransferase subunit (A) and a GMP-binding subunit (B).

It carries out the reaction XMP + L-glutamine + ATP + H2O = GMP + L-glutamate + AMP + diphosphate + 2 H(+). It functions in the pathway purine metabolism; GMP biosynthesis; GMP from XMP (L-Gln route): step 1/1. Functionally, catalyzes the synthesis of GMP from XMP. In Thermoplasma acidophilum (strain ATCC 25905 / DSM 1728 / JCM 9062 / NBRC 15155 / AMRC-C165), this protein is GMP synthase [glutamine-hydrolyzing] subunit A.